A 224-amino-acid chain; its full sequence is Probable Brix domain-containing ribosomal biogenesis protein (224 aa).

The Brix domain maps to 1 to 196 (MMLITTSHRP…IWIMEDGRRW (196 aa)).

Probably involved in the biogenesis of the ribosome. The chain is Probable Brix domain-containing ribosomal biogenesis protein from Pyrococcus abyssi (strain GE5 / Orsay).